Reading from the N-terminus, the 204-residue chain is DNA-directed RNA polymerase III subunit RPC8 (204 aa).

A disordered region spans residues 158–178 (VDTSPTGPSSAEAASSSEELP). Residues 166 to 175 (SSAEAASSSE) are compositionally biased toward low complexity.

This sequence belongs to the eukaryotic RPB7/RPC8 RNA polymerase subunit family. As to quaternary structure, component of the RNA polymerase III complex consisting of 17 subunits: a ten-subunit horseshoe-shaped catalytic core composed of POLR3A/RPC1, POLR3B/RPC2, POLR1C/RPAC1, POLR1D/RPAC2, POLR3K/RPC10, POLR2E/RPABC1, POLR2F/RPABC2, POLR2H/RPABC3, POLR2K/RPABC4 and POLR2L/RPABC5; a mobile stalk composed of two subunits POLR3H/RPC8 and CRCP/RPC9, protruding from the core and functioning primarily in transcription initiation; and additional subunits homologous to general transcription factors of the RNA polymerase II machinery, POLR3C/RPC3-POLR3F/RPC6-POLR3G/RPC7 heterotrimer required for transcription initiation and POLR3D/RPC4-POLR3E/RPC5 heterodimer involved in both transcription initiation and termination. Interacts with CRCP/RPC9. POLR3H/RPC8 and CRCP/RPC9 probably form a Pol III subcomplex.

It localises to the nucleus. Its function is as follows. DNA-dependent RNA polymerase catalyzes the transcription of DNA into RNA using the four ribonucleoside triphosphates as substrates. Specific peripheric component of RNA polymerase III (Pol III) which synthesizes small non-coding RNAs including 5S rRNA, snRNAs, tRNAs and miRNAs from at least 500 distinct genomic loci. With CRCP/RPC9 forms a mobile stalk that protrudes from Pol III core and functions primarily in transcription initiation. Pol III plays a key role in sensing and limiting infection by intracellular bacteria and DNA viruses. Acts as nuclear and cytosolic DNA sensor involved in innate immune response. Can sense non-self dsDNA that serves as template for transcription into dsRNA. The non-self RNA polymerase III transcripts, such as Epstein-Barr virus-encoded RNAs (EBERs) induce type I interferon and NF-kappa-B through the RIG-I pathway. This is DNA-directed RNA polymerase III subunit RPC8 (POLR3H) from Bos taurus (Bovine).